The primary structure comprises 449 residues: Probable glycine dehydrogenase (decarboxylating) subunit 1 (449 aa).

It belongs to the GcvP family. N-terminal subunit subfamily. In terms of assembly, the glycine cleavage system is composed of four proteins: P, T, L and H. In this organism, the P 'protein' is a heterodimer of two subunits.

It carries out the reaction N(6)-[(R)-lipoyl]-L-lysyl-[glycine-cleavage complex H protein] + glycine + H(+) = N(6)-[(R)-S(8)-aminomethyldihydrolipoyl]-L-lysyl-[glycine-cleavage complex H protein] + CO2. In terms of biological role, the glycine cleavage system catalyzes the degradation of glycine. The P protein binds the alpha-amino group of glycine through its pyridoxal phosphate cofactor; CO(2) is released and the remaining methylamine moiety is then transferred to the lipoamide cofactor of the H protein. This is Probable glycine dehydrogenase (decarboxylating) subunit 1 from Sulfurisphaera tokodaii (strain DSM 16993 / JCM 10545 / NBRC 100140 / 7) (Sulfolobus tokodaii).